The sequence spans 117 residues: Large ribosomal subunit protein bL19 (117 aa).

It belongs to the bacterial ribosomal protein bL19 family.

In terms of biological role, this protein is located at the 30S-50S ribosomal subunit interface and may play a role in the structure and function of the aminoacyl-tRNA binding site. This Alkalilimnicola ehrlichii (strain ATCC BAA-1101 / DSM 17681 / MLHE-1) protein is Large ribosomal subunit protein bL19.